The chain runs to 593 residues: Methionine--tRNA ligase (593 aa).

The short motif at 7–17 (PYANGPRHIGH) is the 'HIGH' region element. The Zn(2+) site is built by Cys-139, Cys-142, Cys-152, and Cys-155. The 'KMSKS' region motif lies at 343-347 (KFSTS). Thr-346 contacts ATP.

Belongs to the class-I aminoacyl-tRNA synthetase family. MetG type 1 subfamily. Monomer. Zn(2+) serves as cofactor.

The protein localises to the cytoplasm. The enzyme catalyses tRNA(Met) + L-methionine + ATP = L-methionyl-tRNA(Met) + AMP + diphosphate. Its function is as follows. Is required not only for elongation of protein synthesis but also for the initiation of all mRNA translation through initiator tRNA(fMet) aminoacylation. The sequence is that of Methionine--tRNA ligase from Saccharopolyspora erythraea (strain ATCC 11635 / DSM 40517 / JCM 4748 / NBRC 13426 / NCIMB 8594 / NRRL 2338).